Here is a 564-residue protein sequence, read N- to C-terminus: MAELDLMAPGPLPRATAQPPAPLSPDSGSPSPDSGSASPVEEEDVGSSEKLGRETEEQDSDPAEQGDPAGEGKEVLCDFCLDDTRRVKAVKSCLTCMVNYCEEHLQPHQVNIKLQSHLLTEPVKDHNWRYCPAHHSPLSAFCCPDQQCICQDCCQEHSGHTIVSLDAARRDKEAELQCTQLDLERKLKLNENAISRLQANQKSVLVSVSEVKAVAEMQFGELLAAVRKAQANVMLFLEEKEQAALSQANGIKAHLEYRSAEMEKSKQELERMAAISNTVQFLEEYCKFKNTEDITFPSVYVGLKDKLSGIRKVITESTVHLIQLLENYKKKLQEFSKEEEYDIRTQVSAVVQRKYWTSKPEPSTREQFLQYAYDITFDPDTAHKYLRLQEENRKVTNTTPWEHPYPDLPSRFLHWRQVLSQQSLYLHRYYFEVEIFGAGTYVGLTCKGIDRKGEERNSCISGNNFSWSLQWNGKEFTAWYSDMETPLKAGPFRRLGVYIDFPGGILSFYGVEYDTMTLVHKFACKFSEPVYAAFWLSKKENAIRIVDLGEEPEKPAPSLVGTAP.

A disordered region spans residues Met-1–Gly-70. The span at Ser-24 to Pro-39 shows a compositional bias: low complexity. B box-type zinc fingers lie at residues Gly-72–Pro-122 and His-126–Leu-165. The residue at position 116 (Ser-116) is a Phosphoserine. Zn(2+) is bound by residues Cys-131, His-134, Cys-153, and His-157. Coiled coils occupy residues Leu-165 to Ser-203, Ala-243 to Ala-274, and His-320 to Glu-340. Phosphoserine is present on Ser-203. Positions Tyr-355–Glu-553 constitute a B30.2/SPRY domain.

The protein belongs to the TRIM/RBCC family. Homodimerizes via its coiled-coil domain. Heterodimerizes with MID1, TRIM24 and PML. Interacts with Galectin-3/LGALS3 in a ULK1-dependent manner; this interaction mediates autophagy of damage endomembranes. Interacts with BECN1. Interacts with ATG16L1. Interacts with p62/SQSTM and LC3B/MAP1LC3B. Post-translationally, phosphorylated by ULK1. Auto-ubiquitinates via its B-Boxes.

The protein resides in the cytoplasm. It carries out the reaction S-ubiquitinyl-[E2 ubiquitin-conjugating enzyme]-L-cysteine + [acceptor protein]-L-lysine = [E2 ubiquitin-conjugating enzyme]-L-cysteine + N(6)-ubiquitinyl-[acceptor protein]-L-lysine.. In terms of biological role, E3 ubiquitin ligase that plays an essential role in the organization of autophagic response and ubiquitination upon lysosomal and phagosomal damages. Plays a role in the stress-induced biogenesis and degradation of protein aggresomes by regulating the p62-KEAP1-NRF2 signaling and particularly by modulating the ubiquitination levels and thus stability of NRF2. Acts as a scaffold protein and facilitates autophagic degradation of protein aggregates by interacting with p62/SQSTM, ATG16L1 and LC3B/MAP1LC3B. In turn, protects the cell against oxidative stress-induced cell death as a consequence of endomembrane damage. This Pongo abelii (Sumatran orangutan) protein is E3 ubiquitin-protein ligase TRIM16 (TRIM16).